The following is a 296-amino-acid chain: Developmental pluripotency-associated protein 4 (296 aa).

The span at 1–13 shows a compositional bias: basic and acidic residues; that stretch reads METAGDKKWSAEE. Positions 1–73 are disordered; it reads METAGDKKWS…QTRRKVPIPP (73 aa). Residues 23-34 are compositionally biased toward low complexity; that stretch reads SSQPSTAPAKAK. Over residues 42–58 the composition is skewed to basic and acidic residues; it reads KSETDNGCKPKEGKPQD.

In terms of assembly, interacts with DPPA2. Interacts with PCGF1. As to expression, expressed in pluripotent embryonic cells, but not in differentiated somatic tissues.

It localises to the nucleus. Its function is as follows. May be involved in the maintenance of active epigenetic status of target genes. May inhibit differentiation of embryonic stem (ES) cells into a primitive ectoderm lineage. The protein is Developmental pluripotency-associated protein 4 (Dppa4) of Mus musculus (Mouse).